The sequence spans 395 residues: Tyrosine--tRNA ligase (395 aa).

The 'HIGH' region motif lies at 42 to 51 (PTAPDIHLGH). A 'KMSKS' region motif is present at residues 226-230 (KMSKS). K229 lines the ATP pocket. Positions 334–394 (IGLANLLKEA…GKRKFARVTV (61 aa)) constitute an S4 RNA-binding domain.

The protein belongs to the class-I aminoacyl-tRNA synthetase family. TyrS type 2 subfamily. In terms of assembly, homodimer.

The protein resides in the cytoplasm. The catalysed reaction is tRNA(Tyr) + L-tyrosine + ATP = L-tyrosyl-tRNA(Tyr) + AMP + diphosphate + H(+). Its function is as follows. Catalyzes the attachment of tyrosine to tRNA(Tyr) in a two-step reaction: tyrosine is first activated by ATP to form Tyr-AMP and then transferred to the acceptor end of tRNA(Tyr). This Mannheimia succiniciproducens (strain KCTC 0769BP / MBEL55E) protein is Tyrosine--tRNA ligase.